Here is a 291-residue protein sequence, read N- to C-terminus: RPE-retinal G protein-coupled receptor (291 aa).

Residues 1–15 (MAESGTLPTGFGELE) lie on the Extracellular side of the membrane. The helical transmembrane segment at 16 to 36 (VLAVGTVLLVEALSGLSLNIL) threads the bilayer. Residues 37 to 52 (TILSFCKTPELRTPSH) are Cytoplasmic-facing. Residues 53–73 (LLVLSLALADSGISLNALVAA) traverse the membrane as a helical segment. Residues 74-91 (TSSLLRRWPYGSEGCQAH) lie on the Extracellular side of the membrane. Cys88 and Cys162 form a disulfide bridge. The helical transmembrane segment at 92–112 (GFQGFVTALASICSSAAVAWG) threads the bilayer. Topologically, residues 113–130 (RYHHFCTRSRLDWNTAVS) are cytoplasmic. Residues 131–151 (LVFFVWLSSAFWAALPLLGWG) traverse the membrane as a helical segment. Over 152–175 (HYDYEPLGTCCTLDYSRGDRNFTS) the chain is Extracellular. N-linked (GlcNAc...) asparagine glycosylation is present at Asn172. A helical transmembrane segment spans residues 176–196 (FLFTMAFFNFLLPLFITVVSY). Topologically, residues 197-219 (RLMEQKLGKTSRPPVNTVLPART) are cytoplasmic. The chain crosses the membrane as a helical span at residues 220–240 (LLLGWGPYALLYLYATIADAT). The Extracellular segment spans residues 241–247 (SISPKLQ). Residues 248–268 (MVPALIAKAVPTVNAMNYALG) form a helical membrane-spanning segment. At Lys255 the chain carries N6-(retinylidene)lysine. The Cytoplasmic segment spans residues 269–291 (SEMVHRGIWQCLSPQRREHSREQ).

The protein belongs to the G-protein coupled receptor 1 family. Opsin subfamily. Covalently binds all-trans- and 11-cis-retinal. Preferentially expressed at high levels in the retinal pigment epithelium (RPE) and Mueller cells of the neural retina.

The protein localises to the membrane. Functionally, receptor for all-trans- and 11-cis-retinal. Binds preferentially to the former and may catalyze the isomerization of the chromophore by a retinochrome-like mechanism. The chain is RPE-retinal G protein-coupled receptor (RGR) from Bos taurus (Bovine).